Here is a 1072-residue protein sequence, read N- to C-terminus: DNA-directed RNA polymerase subunit beta (1072 aa).

The protein belongs to the RNA polymerase beta chain family. As to quaternary structure, in plastids the minimal PEP RNA polymerase catalytic core is composed of four subunits: alpha, beta, beta', and beta''. When a (nuclear-encoded) sigma factor is associated with the core the holoenzyme is formed, which can initiate transcription.

The protein localises to the plastid. Its subcellular location is the chloroplast. It carries out the reaction RNA(n) + a ribonucleoside 5'-triphosphate = RNA(n+1) + diphosphate. Its function is as follows. DNA-dependent RNA polymerase catalyzes the transcription of DNA into RNA using the four ribonucleoside triphosphates as substrates. The sequence is that of DNA-directed RNA polymerase subunit beta from Cycas taitungensis (Prince sago).